Reading from the N-terminus, the 629-residue chain is Smc-like protein Sph1 (629 aa).

Coiled coils occupy residues 139 to 282 (LETE…LLDD) and 318 to 487 (AETT…NQFD).

This sequence belongs to the Sph1/Sph2 family.

Its subcellular location is the cytoplasm. In terms of biological role, may play a role in a late step of replication. The sequence is that of Smc-like protein Sph1 (sph1) from Halobacterium salinarum (Halobacterium halobium).